Here is a 410-residue protein sequence, read N- to C-terminus: Gamma-glutamyl phosphate reductase (410 aa).

Belongs to the gamma-glutamyl phosphate reductase family.

The protein resides in the cytoplasm. It catalyses the reaction L-glutamate 5-semialdehyde + phosphate + NADP(+) = L-glutamyl 5-phosphate + NADPH + H(+). It functions in the pathway amino-acid biosynthesis; L-proline biosynthesis; L-glutamate 5-semialdehyde from L-glutamate: step 2/2. In terms of biological role, catalyzes the NADPH-dependent reduction of L-glutamate 5-phosphate into L-glutamate 5-semialdehyde and phosphate. The product spontaneously undergoes cyclization to form 1-pyrroline-5-carboxylate. The sequence is that of Gamma-glutamyl phosphate reductase from Sulfurimonas denitrificans (strain ATCC 33889 / DSM 1251) (Thiomicrospira denitrificans (strain ATCC 33889 / DSM 1251)).